The sequence spans 242 residues: Uridylate kinase (242 aa).

11–14 (KLSG) serves as a coordination point for ATP. The involved in allosteric activation by GTP stretch occupies residues 19 to 24 (GEKGAG). Gly53 is a UMP binding site. The ATP site is built by Gly54 and Arg58. UMP contacts are provided by residues Asp73 and 134-141 (IGSPYFST). Residues Asn162, Tyr168, and Asp171 each contribute to the ATP site.

This sequence belongs to the UMP kinase family. As to quaternary structure, homohexamer.

The protein resides in the cytoplasm. The enzyme catalyses UMP + ATP = UDP + ADP. It functions in the pathway pyrimidine metabolism; CTP biosynthesis via de novo pathway; UDP from UMP (UMPK route): step 1/1. Allosterically activated by GTP. Inhibited by UTP. In terms of biological role, catalyzes the reversible phosphorylation of UMP to UDP. The polypeptide is Uridylate kinase (Streptococcus pyogenes serotype M2 (strain MGAS10270)).